Here is a 499-residue protein sequence, read N- to C-terminus: Glycerol kinase (499 aa).

T12 provides a ligand contact to ADP. ATP is bound by residues T12, T13, and S14. T12 serves as a coordination point for sn-glycerol 3-phosphate. R16 lines the ADP pocket. Residues R82, E83, and Y134 each coordinate sn-glycerol 3-phosphate. Positions 82, 83, and 134 each coordinate glycerol. H230 is modified (phosphohistidine; by HPr). D244 contacts sn-glycerol 3-phosphate. Glycerol is bound by residues D244 and Q245. Positions 266 and 309 each coordinate ADP. ATP is bound by residues T266, G309, Q313, and G410. G410 and N414 together coordinate ADP.

This sequence belongs to the FGGY kinase family. In terms of assembly, homotetramer and homodimer (in equilibrium). Post-translationally, the phosphoenolpyruvate-dependent sugar phosphotransferase system (PTS), including enzyme I, and histidine-containing protein (HPr) are required for the phosphorylation, which leads to the activation of the enzyme.

It catalyses the reaction glycerol + ATP = sn-glycerol 3-phosphate + ADP + H(+). Its pathway is polyol metabolism; glycerol degradation via glycerol kinase pathway; sn-glycerol 3-phosphate from glycerol: step 1/1. Its activity is regulated as follows. Activated by phosphorylation and inhibited by fructose 1,6-bisphosphate (FBP). Its function is as follows. Key enzyme in the regulation of glycerol uptake and metabolism. Catalyzes the phosphorylation of glycerol to yield sn-glycerol 3-phosphate. This is Glycerol kinase from Staphylococcus haemolyticus (strain JCSC1435).